A 1028-amino-acid polypeptide reads, in one-letter code: Pentatricopeptide repeat-containing protein At3g09040, mitochondrial (1028 aa).

The transit peptide at 1 to 30 (MYFRVLLTPSSAMFDSFSFVRRLSYSPDLG) directs the protein to the mitochondrion. PPR repeat units follow at residues 94-123 (EGRL…FLEK), 124-158 (DVTA…QIFP), 159-193 (NKFT…GLER), 194-224 (NSYC…IVDP), 225-259 (NTVC…GHRP), 260-290 (DHLA…MSSP), 291-325 (DVVA…SVKS), 326-360 (TRST…GLAS), 361-391 (NIYV…LEEK), 392-426 (NDVF…GYNI), 427-461 (DDFT…KLAK), 462-492 (NLFV…MCDR), 493-527 (DNVT…GIVS), 528-562 (DGAC…GLDR), 563-593 (DLHT…LPEW), 594-627 (SVVS…GVNP), 628-662 (SEIT…GFSS), 664-694 (GEYL…LSSP), 696-730 (SIVL…GVLP), 731-765 (DQAT…AHDL), 766-796 (DELT…MRRR), 798-832 (NVVS…HIMP), 833-863 (DEIT…MIGQ), and 869-899 (RVDH…QNLK). The interval 904–979 (LWSSLLGACR…VPGYSWIDVE (76 aa)) is type E motif. The tract at residues 980 to 1010 (QRTHIFAAGDKSHSEIGKIEMFLEDLYDLMK) is type E(+) motif.

It belongs to the PPR family. PCMP-E subfamily.

Its subcellular location is the mitochondrion. The chain is Pentatricopeptide repeat-containing protein At3g09040, mitochondrial (PCMP-E88) from Arabidopsis thaliana (Mouse-ear cress).